The primary structure comprises 353 residues: Jasmonate-induced oxygenase 4 (353 aa).

Positions 202 to 302 constitute a Fe2OG dioxygenase domain; that stretch reads VGASLRTNFY…RVSLAFFYNP (101 aa). Arg-207 serves as a coordination point for jasmonate. 2-oxoglutarate is bound by residues Asn-209 and Tyr-211. The Fe cation site is built by His-226, Asp-228, and His-283. Residues Arg-293 and Ser-295 each coordinate 2-oxoglutarate. Positions 332 and 336 each coordinate jasmonate.

The protein belongs to the iron/ascorbate-dependent oxidoreductase family. Requires L-ascorbate as cofactor. Fe(2+) is required as a cofactor.

It carries out the reaction jasmonate + 2-oxoglutarate + O2 = (1R,2R)-12-hydroxyjasmonate + succinate + CO2. 2-oxoglutarate-dependent dioxygenase involved in the oxidation of jasmonate (JA), a stress-induced phytohormone synthesized in response to attack by pathogens and herbivores, which triggers the activation of defense responses via the JA-mediated signaling pathway. Converts JA to 12-hydroxyjasmonate (12OH-JA), an inactive form of JA. Is specific to free JA, and cannot oxidize the bioactive form jasmonoyl-L-isoleucine (JA-Ile) or other JA-amino acid conjugates. Prevents over-accumulation of JA and indirectly its bioactive form JA-Ile under stress response. Acts as a negative regulator of JA-mediated defense signaling, by contributing to 12OH-JA accumulation, which represses JA defense responses upon infection by the fungal pathogen Botrytis cinerea. Acts as a negative regulator of JA-mediated defense responses upon infestation by the herbivorous caterpillar Mamestra brassicae. The sequence is that of Jasmonate-induced oxygenase 4 from Arabidopsis thaliana (Mouse-ear cress).